A 232-amino-acid chain; its full sequence is Ribose-5-phosphate isomerase A (232 aa).

Residues 31–34, 87–90, and 100–103 each bind substrate; these read TGST, DGAD, and KGGG. Catalysis depends on glutamate 109, which acts as the Proton acceptor. Lysine 127 is a substrate binding site.

The protein belongs to the ribose 5-phosphate isomerase family. In terms of assembly, homodimer.

It catalyses the reaction aldehydo-D-ribose 5-phosphate = D-ribulose 5-phosphate. The protein operates within carbohydrate degradation; pentose phosphate pathway; D-ribose 5-phosphate from D-ribulose 5-phosphate (non-oxidative stage): step 1/1. Its function is as follows. Catalyzes the reversible conversion of ribose-5-phosphate to ribulose 5-phosphate. The sequence is that of Ribose-5-phosphate isomerase A from Bifidobacterium longum subsp. infantis (strain ATCC 15697 / DSM 20088 / JCM 1222 / NCTC 11817 / S12).